The following is a 269-amino-acid chain: Phosphate import ATP-binding protein PstB 1 (269 aa).

The ABC transporter domain maps to 25 to 264; sequence LSTEDLHVFY…PQVDLTNDYI (240 aa). 57–64 provides a ligand contact to ATP; the sequence is GPSGSGKS.

The protein belongs to the ABC transporter superfamily. Phosphate importer (TC 3.A.1.7) family. As to quaternary structure, the complex is composed of two ATP-binding proteins (PstB), two transmembrane proteins (PstC and PstA) and a solute-binding protein (PstS).

The protein resides in the cell membrane. It catalyses the reaction phosphate(out) + ATP + H2O = ADP + 2 phosphate(in) + H(+). Part of the ABC transporter complex PstSACB involved in phosphate import. Responsible for energy coupling to the transport system. This Lactiplantibacillus plantarum (strain ATCC BAA-793 / NCIMB 8826 / WCFS1) (Lactobacillus plantarum) protein is Phosphate import ATP-binding protein PstB 1.